The chain runs to 1791 residues: 1-phosphatidylinositol-3-phosphate 5-kinase FAB1B (1791 aa).

The FYVE-type zinc finger occupies 39-105 (DQSCRVCYEC…VCNYCFRQWE (67 aa)). Positions 45, 48, 61, 64, 69, 72, 97, and 100 each coordinate Zn(2+). 4 disordered regions span residues 166–186 (HGVS…SRRS), 279–370 (EQFQ…DRTT), 770–790 (SDLS…NPIV), and 834–859 (QQNN…DHQS). The segment covering 279–293 (EQFQKKSEHDGRDEC) has biased composition (basic and acidic residues). Residues 324-345 (PENEEDERESALFDEEDNEGDA) show a composition bias toward acidic residues. Basic and acidic residues predominate over residues 838-850 (EKPKETQSQKEEF). Residues 1077 to 1111 (EKGFRRRIGELEEVLQKEKAEFEENMQKILHREVN) are a coiled coil. Residues 1151–1164 (NSDDTKREENEKPP) are compositionally biased toward basic and acidic residues. The interval 1151 to 1242 (NSDDTKREEN…DTSYPLENKV (92 aa)) is disordered. 2 stretches are compositionally biased toward polar residues: residues 1167–1188 (KSQT…SEVN) and 1196–1206 (TGDTGSLNNVQ). A PIPK domain is found at 1433–1758 (SELNIPRPVD…RFRKAMTTYF (326 aa)). The disordered stretch occupies residues 1769 to 1791 (NVVANNSKSDQPEETSQAGTQAE). Residues 1771–1791 (VANNSKSDQPEETSQAGTQAE) show a composition bias toward polar residues.

Component of the PI(3,5)P2 regulatory complex at least composed of ATG18, SAC/FIG4, FAB1 and VAC14. It depends on Mg(2+) as a cofactor. Mn(2+) serves as cofactor. In terms of tissue distribution, ubiquitous with highest expression levels in the root hair zone, pollen, and stamens.

Its subcellular location is the endosome membrane. It carries out the reaction a 1,2-diacyl-sn-glycero-3-phospho-(1D-myo-inositol-3-phosphate) + ATP = a 1,2-diacyl-sn-glycero-3-phospho-(1D-myo-inositol-3,5-bisphosphate) + ADP + H(+). The PI(3,5)P2 regulatory complex regulates both the synthesis and turnover of phosphatidylinositol 3,5-bisphosphate (PtdIns(3,5)P2). Catalyzes the phosphorylation of phosphatidylinositol 3-phosphate on the fifth hydroxyl of the myo-inositol ring, to form phosphatidylinositol 3,5-bisphosphate. Plays an important role in maintenance of endomembrane homeostasis including endocytosis, vacuole formation, and vacuolar acidification processes. Required for development of viable pollen. Might mediate recycling of auxin transporters. The chain is 1-phosphatidylinositol-3-phosphate 5-kinase FAB1B (FAB1B) from Arabidopsis thaliana (Mouse-ear cress).